Reading from the N-terminus, the 242-residue chain is Carbendazim hydrolyzing esterase (242 aa).

Ser-77 serves as the catalytic Acyl-ester intermediate.

This sequence belongs to the AB hydrolase superfamily.

The protein localises to the secreted. The catalysed reaction is carbendazim + H2O = 2-aminobenzimidazole + methanol + CO2. The enzyme catalyses carbendazim + H2O = N-(1H-1,3-benzodiazol-2-yl)carbamate + methanol + H(+). It carries out the reaction N-(1H-1,3-benzodiazol-2-yl)carbamate + H(+) = 2-aminobenzimidazole + CO2. Catalyzes the hydrolysis of the fungicide carbendazim (methyl-1H-benzimidazol-2-ylcarbamate or MBC) to 2-aminobenzimidazole (2-AB). Following hydrolysis of the carbamate ester, the carbamate decarboxylates spontaneously. Can hydrolyze model carboxylesters such as methyl salicylate, alpha-naphthyl acetate and p-nitrophenyl acetate. In addition, shows substantial hydrolytic activity in vitro against widespread pollutants with carboxylester, carbamate and amide linkages, such as dimethyl phthalate, propanil and chlorpropham. This Nocardioides sp. (strain SG-4G) protein is Carbendazim hydrolyzing esterase.